Here is a 367-residue protein sequence, read N- to C-terminus: 2-oxoisovalerate dehydrogenase subunit alpha (367 aa).

Substrate contacts are provided by residues F66, Y95, 128–131 (MPEH), and S144. 94–96 (YYR) is a binding site for thiamine diphosphate. Residues 144–146 (SPI), 174–180 (GDGATSE), 204–208 (NFYAI), and H273 each bind thiamine diphosphate. Positions 175, 204, and 206 each coordinate Mg(2+).

The protein belongs to the BCKDHA family. In terms of assembly, heterotetramer of two alpha and two beta chains. Directly associated with ODBB in the E1 complex. Requires thiamine diphosphate as cofactor.

The catalysed reaction is N(6)-[(R)-lipoyl]-L-lysyl-[protein] + 3-methyl-2-oxobutanoate + H(+) = N(6)-[(R)-S(8)-2-methylpropanoyldihydrolipoyl]-L-lysyl-[protein] + CO2. Functionally, the branched-chain alpha-keto dehydrogenase complex catalyzes the overall conversion of alpha-keto acids to acyl-CoA and CO(2). It contains multiple copies of three enzymatic components: branched-chain alpha-keto acid decarboxylase (E1), lipoamide acyltransferase (E2) and lipoamide dehydrogenase (E3). This Thermus thermophilus (strain ATCC 27634 / DSM 579 / HB8) protein is 2-oxoisovalerate dehydrogenase subunit alpha.